Reading from the N-terminus, the 334-residue chain is DGAT1/2-independent enzyme synthesizing storage lipids (334 aa).

Topologically, residues 1-50 are lumenal; the sequence is MTNKNQSFGVGQDSMSSMTCLIHVLEAWFGVEHLEDYWNFANYLLWVFTP. Asparagine 5 carries an N-linked (GlcNAc...) asparagine glycan. Residues 51–71 traverse the membrane as a helical segment; it reads LLLLILPYFTIFLLYLTIIFL. The Cytoplasmic segment spans residues 72–125; that stretch reads HIYKRKNVLKEAYSHNLWDGARKTVATLWDGHAAVWHGYEVHGMEKIPEEGPAL. The helical transmembrane segment at 126-146 threads the bilayer; that stretch reads IIFYHGAIPIDFYYFMAKIFI. The active site involves histidine 130. Over 147-334 the chain is Lumenal; sequence HKGRTCRVVA…NKQKINQKTL (188 aa).

The protein belongs to the diacylglycerol acyltransferase family. Highly divergent.

The protein localises to the endoplasmic reticulum membrane. The catalysed reaction is a 1,2-diacylglycerol + a 1,2-diacyl-sn-glycero-3-phosphocholine = a triacylglycerol + a 1-acyl-sn-glycero-3-phosphocholine. It catalyses the reaction a 1-O-alkyl-2-acyl-sn-glycero-3-phosphocholine + a 1,2-diacylglycerol = a 1-O-alkyl-sn-glycero-3-phosphocholine + a triacylglycerol. The enzyme catalyses a 2-acylglycerol + an acyl-CoA = a 1,2-diacylglycerol + CoA. It carries out the reaction an acyl-CoA + a 1,2-diacyl-sn-glycerol = a triacyl-sn-glycerol + CoA. The catalysed reaction is 2-(9Z-octadecenoyl)-glycerol + (9Z)-octadecenoyl-CoA = 1,2-di-(9Z-octadecenoyl)-glycerol + CoA. It catalyses the reaction 1,2-di-(9Z-octadecenoyl)-sn-glycerol + (9Z)-octadecenoyl-CoA = 1,2,3-tri-(9Z-octadecenoyl)-glycerol + CoA. Acyltransferase activity is specifically inhibited by TMX1 at the endoplasmic reticulum, restricting accumulation of triacylglycerol. Its function is as follows. Catalytic subunit of the alternative triglyceride biosynthesis pathway, which mediates formation of triacylglycerol from diacylglycerol and membrane phospholipids. Synthesizes triacylglycerol at the expense of membrane phospholipids, such as phosphatidylcholine (PC) and its ether-linked form (ePC), thereby altering the composition of membranes. The alternative triglyceride biosynthesis pathway is probably required to provide the energy required for rapid growth when fuel sources are limiting. It maintains mitochondrial function during periods of extracellular lipid starvation. Can also use acyl-CoA as donor: acts as a acyl-CoA:monoacylglycerol acyltransferase (MGAT), but also shows acyl-CoA:diacylglycerol acyltransferase (DGAT) activity. The sequence is that of DGAT1/2-independent enzyme synthesizing storage lipids (TMEM68) from Bos taurus (Bovine).